We begin with the raw amino-acid sequence, 389 residues long: GTPase Obg (389 aa).

The 159-residue stretch at 1-159 folds into the Obg domain; sequence MKFVDEAVIK…RELRLELLLL (159 aa). An OBG-type G domain is found at 160–333; the sequence is ADVGLLGMPN…LAEKLFDFIK (174 aa). Residues 166 to 173, 191 to 195, 213 to 216, 283 to 286, and 314 to 316 each bind GTP; these read GMPNAGKS, FTTLV, DIPG, NKTD, and SAA. Mg(2+) is bound by residues Ser173 and Thr193.

The protein belongs to the TRAFAC class OBG-HflX-like GTPase superfamily. OBG GTPase family. Monomer. It depends on Mg(2+) as a cofactor.

The protein resides in the cytoplasm. An essential GTPase which binds GTP, GDP and possibly (p)ppGpp with moderate affinity, with high nucleotide exchange rates and a fairly low GTP hydrolysis rate. Plays a role in control of the cell cycle, stress response, ribosome biogenesis and in those bacteria that undergo differentiation, in morphogenesis control. The sequence is that of GTPase Obg from Shewanella amazonensis (strain ATCC BAA-1098 / SB2B).